Here is a 329-residue protein sequence, read N- to C-terminus: Ketol-acid reductoisomerase (NADP(+)) (329 aa).

In terms of domain architecture, KARI N-terminal Rossmann spans 2-182; it reads TQLFYDTDAD…GGTRAGILET (181 aa). Residues 25–28, Ser-51, Ser-53, and 83–86 each bind NADP(+); these read YGSQ and DEFQ. Residue His-108 is part of the active site. Gly-134 lines the NADP(+) pocket. A KARI C-terminal knotted domain is found at 183–328; that stretch reads NFKEETETDL…KGLRAMFSWL (146 aa). Positions 191, 195, 227, and 231 each coordinate Mg(2+). Ser-252 provides a ligand contact to substrate.

It belongs to the ketol-acid reductoisomerase family. Mg(2+) serves as cofactor.

It catalyses the reaction (2R)-2,3-dihydroxy-3-methylbutanoate + NADP(+) = (2S)-2-acetolactate + NADPH + H(+). It carries out the reaction (2R,3R)-2,3-dihydroxy-3-methylpentanoate + NADP(+) = (S)-2-ethyl-2-hydroxy-3-oxobutanoate + NADPH + H(+). Its pathway is amino-acid biosynthesis; L-isoleucine biosynthesis; L-isoleucine from 2-oxobutanoate: step 2/4. It participates in amino-acid biosynthesis; L-valine biosynthesis; L-valine from pyruvate: step 2/4. Involved in the biosynthesis of branched-chain amino acids (BCAA). Catalyzes an alkyl-migration followed by a ketol-acid reduction of (S)-2-acetolactate (S2AL) to yield (R)-2,3-dihydroxy-isovalerate. In the isomerase reaction, S2AL is rearranged via a Mg-dependent methyl migration to produce 3-hydroxy-3-methyl-2-ketobutyrate (HMKB). In the reductase reaction, this 2-ketoacid undergoes a metal-dependent reduction by NADPH to yield (R)-2,3-dihydroxy-isovalerate. This is Ketol-acid reductoisomerase (NADP(+)) from Prochlorococcus marinus subsp. pastoris (strain CCMP1986 / NIES-2087 / MED4).